A 439-amino-acid chain; its full sequence is UDP-N-acetylmuramoylalanine--D-glutamate ligase (439 aa).

112–118 contacts ATP; the sequence is GSNGKST.

Belongs to the MurCDEF family.

It localises to the cytoplasm. The enzyme catalyses UDP-N-acetyl-alpha-D-muramoyl-L-alanine + D-glutamate + ATP = UDP-N-acetyl-alpha-D-muramoyl-L-alanyl-D-glutamate + ADP + phosphate + H(+). Its pathway is cell wall biogenesis; peptidoglycan biosynthesis. Cell wall formation. Catalyzes the addition of glutamate to the nucleotide precursor UDP-N-acetylmuramoyl-L-alanine (UMA). The sequence is that of UDP-N-acetylmuramoylalanine--D-glutamate ligase from Mannheimia succiniciproducens (strain KCTC 0769BP / MBEL55E).